Reading from the N-terminus, the 244-residue chain is MVLHVITALLSIGLCYGMPPSGTTAAPTAYNGAAAQESLIPQQAHHARASLFPQQQRNPSYQTMGSYGSSLFDPSVFPVAHAPASQAGGLLGRAVARTSGGQANAGASSQNLMRSIMQNTMTGRLMGLDNQEIAHLNSVRTLGVGHATIHRLMKIDQIPSYNYYLALKNKPAQFSKAQNYLMTLNRMENHATDSQLEAMGARMLMQRNMDPDLARMVQLDAARGVYGDRLQRVLLGGSQMSLLG.

Positions 1–17 (MVLHVITALLSIGLCYG) are cleaved as a signal peptide.

In terms of tissue distribution, component of the acid-soluble and acid-insoluble organic matrix of prismatic shell layers (at protein level).

It is found in the secreted. This is an uncharacterized protein from Haliotis asinina (Donkey's ear abalone).